The following is a 169-amino-acid chain: NADH-quinone oxidoreductase subunit B (169 aa).

[4Fe-4S] cluster contacts are provided by C42, C43, C107, and C136.

Belongs to the complex I 20 kDa subunit family. As to quaternary structure, NDH-1 is composed of 14 different subunits. Subunits NuoB, C, D, E, F, and G constitute the peripheral sector of the complex. [4Fe-4S] cluster serves as cofactor.

The protein localises to the cell inner membrane. It carries out the reaction a quinone + NADH + 5 H(+)(in) = a quinol + NAD(+) + 4 H(+)(out). Functionally, NDH-1 shuttles electrons from NADH, via FMN and iron-sulfur (Fe-S) centers, to quinones in the respiratory chain. Couples the redox reaction to proton translocation (for every two electrons transferred, four hydrogen ions are translocated across the cytoplasmic membrane), and thus conserves the redox energy in a proton gradient. This is NADH-quinone oxidoreductase subunit B from Campylobacter hominis (strain ATCC BAA-381 / DSM 21671 / CCUG 45161 / LMG 19568 / NCTC 13146 / CH001A).